A 349-amino-acid polypeptide reads, in one-letter code: 5-deoxyribose 1-phosphate isomerase (349 aa).

Substrate-binding positions include 49–51, Arg92, and Gln199; that span reads RGA. Catalysis depends on Asp240, which acts as the Proton donor. 250–251 is a binding site for substrate; it reads NK.

The protein belongs to the EIF-2B alpha/beta/delta subunits family. DrdI subfamily.

The catalysed reaction is 5-deoxy-alpha-D-ribose 1-phosphate = 5-deoxy-D-ribulose 1-phosphate. It functions in the pathway carbohydrate degradation. Functionally, catalyzes the isomerization of 5-deoxy-alpha-D-ribose 1-phosphate to 5-deoxy-D-ribulose 1-phosphate, as part of a 5-deoxyribose salvage pathway that recycles this toxic radical SAM enzyme by-product to mainstream metabolites. The polypeptide is 5-deoxyribose 1-phosphate isomerase (Clostridium botulinum (strain Okra / Type B1)).